The primary structure comprises 250 residues: NADH-quinone oxidoreductase subunit C (250 aa).

This sequence belongs to the complex I 30 kDa subunit family. NDH-1 is composed of 14 different subunits. Subunits NuoB, C, D, E, F, and G constitute the peripheral sector of the complex.

The protein resides in the cell inner membrane. It carries out the reaction a quinone + NADH + 5 H(+)(in) = a quinol + NAD(+) + 4 H(+)(out). Its function is as follows. NDH-1 shuttles electrons from NADH, via FMN and iron-sulfur (Fe-S) centers, to quinones in the respiratory chain. The immediate electron acceptor for the enzyme in this species is believed to be ubiquinone. Couples the redox reaction to proton translocation (for every two electrons transferred, four hydrogen ions are translocated across the cytoplasmic membrane), and thus conserves the redox energy in a proton gradient. In Xanthomonas euvesicatoria pv. vesicatoria (strain 85-10) (Xanthomonas campestris pv. vesicatoria), this protein is NADH-quinone oxidoreductase subunit C.